A 465-amino-acid polypeptide reads, in one-letter code: Protein unc-93 homolog A (465 aa).

Transmembrane regions (helical) follow at residues 8 to 28 (VLVV…LQSL), 40 to 60 (VISL…LPPI), 71 to 91 (IVVS…PGWA), 96 to 118 (TSAI…LTIS), and 140 to 160 (IFFF…SLIF). N-linked (GlcNAc...) asparagine glycosylation is found at Asn183 and Asn189. Residues 200-220 (TLLGCYIGVGLLAIIFVAVFL) form a helical membrane-spanning segment. The N-linked (GlcNAc...) asparagine glycan is linked to Asn237. 5 helical membrane passes run 256–276 (LLLL…LSGE), 281–301 (YVTC…FAAS), 319–339 (IALF…LLYW), 343–363 (PDQL…DAVW), and 410–427 (IYIA…YLYV).

This sequence belongs to the unc-93 family.

It localises to the membrane. This is Protein unc-93 homolog A (unc93a) from Danio rerio (Zebrafish).